The chain runs to 288 residues: NADPH-dependent aldehyde reductase 1, chloroplastic (288 aa).

Residues 1-18 are compositionally biased toward basic and acidic residues; it reads MASEKQKQHAQPGKEHVM. The tract at residues 1 to 32 is disordered; it reads MASEKQKQHAQPGKEHVMESSPQFSSSDYQPS. Over residues 20–32 the composition is skewed to polar residues; the sequence is SSPQFSSSDYQPS. NADP(+) is bound at residue 47–71; sequence SGIGRAVGYCFASEGATVAFTYVKG. Ser179 contributes to the substrate binding site. Tyr192 (proton acceptor) is an active-site residue.

It belongs to the short-chain dehydrogenases/reductases (SDR) family.

The protein localises to the plastid. Its subcellular location is the chloroplast. Its function is as follows. Aldehyde reductase that catalyzes the reduction of the aldehyde carbonyl groups on saturated and alpha,beta-unsaturated aldehydes with more than 5 carbons. No activity on alpha,beta-unsaturated ketones. Can use propionaldehyde, butyraldehyde, methylglyoxal, (e)-2-pentenal, (E)-2-hexenal, (Z)-3-hexenal and (E)-2-nonenal as substrates, but not propenal (acrolein), crotonaldehyde, 2-butanone, 3-buten-2-one or 1-penten-3-one. May act as a short alcohol-polyol-sugar dehydrogenase possibly related to carbohydrate metabolism and the acquisition of desiccation tolerance. May also be involved in signal transduction. The chain is NADPH-dependent aldehyde reductase 1, chloroplastic from Arabidopsis thaliana (Mouse-ear cress).